The primary structure comprises 419 residues: Serine hydroxymethyltransferase (419 aa).

(6S)-5,6,7,8-tetrahydrofolate contacts are provided by residues Leu-121 and 125–127; that span reads GHL. Lys-229 carries the post-translational modification N6-(pyridoxal phosphate)lysine.

This sequence belongs to the SHMT family. In terms of assembly, homodimer. The cofactor is pyridoxal 5'-phosphate.

The protein localises to the cytoplasm. It carries out the reaction (6R)-5,10-methylene-5,6,7,8-tetrahydrofolate + glycine + H2O = (6S)-5,6,7,8-tetrahydrofolate + L-serine. It functions in the pathway one-carbon metabolism; tetrahydrofolate interconversion. The protein operates within amino-acid biosynthesis; glycine biosynthesis; glycine from L-serine: step 1/1. Catalyzes the reversible interconversion of serine and glycine with tetrahydrofolate (THF) serving as the one-carbon carrier. This reaction serves as the major source of one-carbon groups required for the biosynthesis of purines, thymidylate, methionine, and other important biomolecules. Also exhibits THF-independent aldolase activity toward beta-hydroxyamino acids, producing glycine and aldehydes, via a retro-aldol mechanism. The sequence is that of Serine hydroxymethyltransferase from Streptomyces griseus subsp. griseus (strain JCM 4626 / CBS 651.72 / NBRC 13350 / KCC S-0626 / ISP 5235).